Consider the following 342-residue polypeptide: MISIEGLSKVFSLNKKDIKAVDSLTLNIENGDIYGVIGYSGAGKSTFVRLINRLEEPTSGKVTIGDQVITELNKNDLRVARQDIGMIFQHFNLLWSRTVEDNIGFPLEIAGVDKQEKARRVKELIGLVGLEGREKSYPSQLSGGQKQRVGIARALANSPKVLLCDEATSALDPETTNQILSLLQDINEKLNLTIILITHEMHVIRKICNRVAVMEQGKVVEEGQVLDVFTNPKQLVTRKFVEQVMSSNEDSDISTIIENYPDGVLYRVHFLGETTNQTLISQIAKQFSVDLNIIQGNITQTQAGSYGALVVQVTGNESEIERAKSFIESQESVELEVIQHAK.

The 240-residue stretch at 2-241 folds into the ABC transporter domain; the sequence is ISIEGLSKVF…PKQLVTRKFV (240 aa). 38 to 45 contacts ATP; that stretch reads GYSGAGKS.

It belongs to the ABC transporter superfamily. Methionine importer (TC 3.A.1.24) family. As to quaternary structure, the complex is composed of two ATP-binding proteins (MetN), two transmembrane proteins (MetI) and a solute-binding protein (MetQ).

It is found in the cell membrane. The enzyme catalyses L-methionine(out) + ATP + H2O = L-methionine(in) + ADP + phosphate + H(+). It catalyses the reaction D-methionine(out) + ATP + H2O = D-methionine(in) + ADP + phosphate + H(+). Functionally, part of the ABC transporter complex MetNIQ involved in methionine import. Responsible for energy coupling to the transport system. The protein is Methionine import ATP-binding protein MetN 2 of Oceanobacillus iheyensis (strain DSM 14371 / CIP 107618 / JCM 11309 / KCTC 3954 / HTE831).